The following is a 267-amino-acid chain: Neutrophil elastase (267 aa).

The first 27 residues, 1–27 (MTLGRRLACLFLACVLPALLLGGTALA), serve as a signal peptide directing secretion. Residues 28–29 (SE) constitute a propeptide that is removed on maturation. In terms of domain architecture, Peptidase S1 spans 30–247 (IVGGRRARPH…FVNWIDSIIQ (218 aa)). Residues cysteine 55 and cysteine 71 are joined by a disulfide bond. Histidine 70 (charge relay system) is an active-site residue. The N-linked (GlcNAc...) asparagine glycan is linked to asparagine 88. Residue aspartate 117 is the Charge relay system of the active site. Asparagine 124 and asparagine 173 each carry an N-linked (GlcNAc...) asparagine glycan. Cystine bridges form between cysteine 151-cysteine 208, cysteine 181-cysteine 187, and cysteine 198-cysteine 223. Serine 202 functions as the Charge relay system in the catalytic mechanism.

The protein belongs to the peptidase S1 family. Elastase subfamily. Interacts with NOTCH2NL. Interacts with agaphelin, an antihemostatic protein from Anopheles gambiae. In terms of tissue distribution, bone marrow cells. Neutrophil.

It localises to the cytoplasmic vesicle. The protein resides in the phagosome. It carries out the reaction Hydrolysis of proteins, including elastin. Preferential cleavage: Val-|-Xaa &gt; Ala-|-Xaa.. Serine protease that modifies the functions of natural killer cells, monocytes and granulocytes. Inhibits C5a-dependent neutrophil enzyme release and chemotaxis. Promotes cleavage of GSDMB, thereby inhibiting pyroptosis. Promotes blood coagulation. Through the activation of the platelet fibrinogen receptor integrin alpha-IIb/beta-3, potentiates platelet aggregation induced by a threshold concentration of cathepsin G (CTSG). Cleaves and thus inactivates tissue factor pathway inhibitor (TFPI). Capable of killing E.coli but not S.aureus in vitro; digests outer membrane protein A (ompA) in E.coli and K.pneumoniae. This chain is Neutrophil elastase (ELANE), found in Homo sapiens (Human).